The primary structure comprises 373 residues: tRNA N6-adenosine threonylcarbamoyltransferase (373 aa).

A divalent metal cation is bound by residues His128, His132, and Tyr149. Residues 149–153, Asp181, Gly196, Glu200, and Asn302 each bind substrate; that span reads YVSGG. Asp331 contacts a divalent metal cation.

Belongs to the KAE1 / TsaD family. In terms of assembly, component of the EKC/KEOPS complex composed of at least BUD32, CGI121, GON7, KAE1 and PCC1; the whole complex dimerizes. The cofactor is a divalent metal cation.

The protein localises to the cytoplasm. It localises to the nucleus. It catalyses the reaction L-threonylcarbamoyladenylate + adenosine(37) in tRNA = N(6)-L-threonylcarbamoyladenosine(37) in tRNA + AMP + H(+). Its function is as follows. Component of the EKC/KEOPS complex that is required for the formation of a threonylcarbamoyl group on adenosine at position 37 (t(6)A37) in tRNAs that read codons beginning with adenine. The complex is probably involved in the transfer of the threonylcarbamoyl moiety of threonylcarbamoyl-AMP (TC-AMP) to the N6 group of A37. KAE1 likely plays a direct catalytic role in this reaction, but requires other protein(s) of the complex to fulfill this activity. The EKC/KEOPS complex also promotes both telomere uncapping and telomere elongation. The complex is required for efficient recruitment of transcriptional coactivators. The sequence is that of tRNA N6-adenosine threonylcarbamoyltransferase from Candida glabrata (strain ATCC 2001 / BCRC 20586 / JCM 3761 / NBRC 0622 / NRRL Y-65 / CBS 138) (Yeast).